A 372-amino-acid polypeptide reads, in one-letter code: NAD(P)H-quinone oxidoreductase subunit 1 (372 aa).

8 helical membrane-spanning segments follow: residues 29-49 (WIPL…LVVV), 97-117 (WLFT…YLIV), 130-150 (VGIF…LMSG), 176-196 (LAFS…IDIV), 204-224 (ILGW…IAAL), 254-274 (FGLF…VFAI), 308-328 (SLGI…AVLL), and 347-367 (FLLP…LAFP).

This sequence belongs to the complex I subunit 1 family. In terms of assembly, NDH-1 is composed of at least 11 different subunits.

The protein resides in the cellular thylakoid membrane. The catalysed reaction is a plastoquinone + NADH + (n+1) H(+)(in) = a plastoquinol + NAD(+) + n H(+)(out). It catalyses the reaction a plastoquinone + NADPH + (n+1) H(+)(in) = a plastoquinol + NADP(+) + n H(+)(out). NDH-1 shuttles electrons from an unknown electron donor, via FMN and iron-sulfur (Fe-S) centers, to quinones in the respiratory and/or the photosynthetic chain. The immediate electron acceptor for the enzyme in this species is believed to be plastoquinone. Couples the redox reaction to proton translocation, and thus conserves the redox energy in a proton gradient. In Rippkaea orientalis (strain PCC 8801 / RF-1) (Cyanothece sp. (strain PCC 8801)), this protein is NAD(P)H-quinone oxidoreductase subunit 1.